The chain runs to 295 residues: Septu protein PtuB (295 aa).

Its function is as follows. Component of antiviral defense system Septu type II, composed of PtuA and PtuB. Expression of Septu type II in B.subtilis (strain BEST7003) confers resistance to phages SBSphiC and SpBeta. May be a nuclease. The sequence is that of Septu protein PtuB from Bacillus mycoides (strain KBAB4) (Bacillus weihenstephanensis).